The primary structure comprises 511 residues: Glucans biosynthesis protein G (511 aa).

Residues 1 to 22 form the signal peptide; that stretch reads MMKMRWLGAAIMLTLYASSSWA.

This sequence belongs to the OpgD/OpgG family.

It localises to the periplasm. The protein operates within glycan metabolism; osmoregulated periplasmic glucan (OPG) biosynthesis. Functionally, involved in the biosynthesis of osmoregulated periplasmic glucans (OPGs). This Salmonella paratyphi A (strain ATCC 9150 / SARB42) protein is Glucans biosynthesis protein G.